A 1233-amino-acid chain; its full sequence is Structural maintenance of chromosomes protein 1A (1233 aa).

Residue 32–39 (GPNGSGKS) coordinates ATP. 2 coiled-coil regions span residues 104-124 (EYKI…LEKL) and 163-503 (ELAQ…KAEI). The segment covering 284–293 (IKEKDSELNQ) has biased composition (basic and acidic residues). Disordered stretches follow at residues 284-307 (IKEK…NTSH) and 350-369 (FEER…TLEE). Ser358 and Ser360 each carry phosphoserine. Positions 515 to 629 (VYGRLIDLCQ…DNVEDARRIA (115 aa)) constitute an SMC hinge domain. Residues Lys648 and Lys713 each carry the N6-acetyllysine modification. The stretch at 660–935 (KAKARRWDEK…RHNLLQACKM (276 aa)) forms a coiled coil. The segment at 946-969 (TMDDISQEEGGSQGEESVSGSQRT) is disordered. Low complexity predominate over residues 953–967 (EEGGSQGEESVSGSQ). A phosphoserine mark is found at Ser957, Ser962, Ser966, and Ser970. A coiled-coil region spans residues 991–1068 (KDAQAEEEIK…FEQIKKERFD (78 aa)). Lys1037 is modified (N6-acetyllysine).

The protein belongs to the SMC family. SMC1 subfamily. Forms a heterodimer with SMC3 in cohesin complexes. Cohesin complexes are composed of the SMC1 (SMC1A or meiosis-specific SMC1B) and SMC3 heterodimer attached via their SMC hinge domain, RAD21 which link them, and one STAG protein (STAG1, STAG2 or meiosis-specific STAG3), which interacts with RAD21. In germ cell cohesin complexes, SMC1A is mutually exclusive with SMC1B. Found in a complex with CDCA5, SMC3 and RAD21, PDS5A/SCC-112 and PDS5B/APRIN. Interacts with STAG3, NDC80, BRAC1, BRAT1 and RPGR. Found in a complex containing POLE and SMC3. The cohesin complex interacts with the cohesin loading complex subunits NIPBL/Scc2 (via HEAT repeats) and MAU2/Scc4. NIPBL directly contacts all members of the complex, RAD21, SMC1A/B, SMC3 and STAG1. Interacts with SYCP2. Post-translationally, phosphorylated upon ionizing radiation or DNA methylation. Phosphorylation of Ser-957 and Ser-966 activates it and is required for S-phase checkpoint activation. In terms of processing, ubiquitinated by the DCX(DCAF15) complex, leading to its degradation.

The protein resides in the nucleus. Its subcellular location is the chromosome. Involved in chromosome cohesion during cell cycle and in DNA repair. Central component of cohesin complex. The cohesin complex is required for the cohesion of sister chromatids after DNA replication. The cohesin complex apparently forms a large proteinaceous ring within which sister chromatids can be trapped. At anaphase, the complex is cleaved and dissociates from chromatin, allowing sister chromatids to segregate. The cohesin complex may also play a role in spindle pole assembly during mitosis. Involved in DNA repair via its interaction with BRCA1 and its related phosphorylation by ATM, or via its phosphorylation by ATR. Works as a downstream effector both in the ATM/NBS1 branch and in the ATR/MSH2 branch of S-phase checkpoint. The chain is Structural maintenance of chromosomes protein 1A (Smc1a) from Rattus norvegicus (Rat).